The following is a 192-amino-acid chain: uncharacterized protein (192 aa).

Residues 29–160 (HRQAAVLIPI…PLDIYRRGDS (132 aa)) enclose the Nudix hydrolase domain. The Nudix box motif lies at 67–89 (GAVDDTDTSVIAAALREAEEEVA). Positions 83 and 87 each coordinate Mg(2+).

Belongs to the Nudix hydrolase family. PCD1 subfamily. Mn(2+) is required as a cofactor. It depends on Mg(2+) as a cofactor.

Functionally, probably mediates the hydrolysis of some nucleoside diphosphate derivatives. This is an uncharacterized protein from Escherichia fergusonii (strain ATCC 35469 / DSM 13698 / CCUG 18766 / IAM 14443 / JCM 21226 / LMG 7866 / NBRC 102419 / NCTC 12128 / CDC 0568-73).